The following is a 124-amino-acid chain: Iron-sulfur cluster insertion protein ErpA (124 aa).

Residues Cys-52, Cys-116, and Cys-118 each contribute to the iron-sulfur cluster site.

This sequence belongs to the HesB/IscA family. In terms of assembly, homodimer. Iron-sulfur cluster is required as a cofactor.

Required for insertion of 4Fe-4S clusters for at least IspG. The polypeptide is Iron-sulfur cluster insertion protein ErpA (Vibrio atlanticus (strain LGP32) (Vibrio splendidus (strain Mel32))).